A 461-amino-acid polypeptide reads, in one-letter code: Cysteine--tRNA ligase (461 aa).

Residue C28 coordinates Zn(2+). The 'HIGH' region motif lies at 30–40; sequence ITIYDLCHIGH. Residues C209, H234, and E238 each coordinate Zn(2+). The 'KMSKS' region signature appears at 266–270; it reads KMSKS. An ATP-binding site is contributed by K269.

It belongs to the class-I aminoacyl-tRNA synthetase family. As to quaternary structure, monomer. The cofactor is Zn(2+).

It is found in the cytoplasm. It carries out the reaction tRNA(Cys) + L-cysteine + ATP = L-cysteinyl-tRNA(Cys) + AMP + diphosphate. The chain is Cysteine--tRNA ligase from Yersinia pseudotuberculosis serotype IB (strain PB1/+).